The sequence spans 752 residues: Mitochondrial Rho GTPase 1 (752 aa).

Topologically, residues 1-671 are cytoplasmic; it reads MRKDVRIVLA…RNALSYGTNR (671 aa). Residues 2-170 form the Miro 1 domain; the sequence is RKDVRIVLAG…FYFAQKAVLY (169 aa). GTP is bound by residues 11-18, 57-61, and 115-118; these read GDPDVGKS, DTSSS, and NKID. EF-hand domains lie at 186 to 221 and 333 to 368; these read ACVD…CFDT and NGYQ…APDN. The Ca(2+) site is built by Asp199, Asp201, Asp203, Glu210, Asp346, Asp348, Asp350, and Glu357. The disordered stretch occupies residues 426–460; it reads SSGSASTPAPIPLTPTGPPGSRPSRNRTPCPPSTI. A compositionally biased stretch (pro residues) spans 434–446; that stretch reads APIPLTPTGPPGS. Residues 481–651 form the Miro 2 domain; sequence RSVFLGFVLG…YGLICTIAVD (171 aa). Residues 490 to 497, 526 to 530, and 595 to 598 contribute to the GTP site; these read GAAGSGKT, EQAGA, and TKAD. A helical; Anchor for type IV membrane protein transmembrane segment spans residues 672 to 692; sequence WQFWGYIGLVVIGGGGAVWIC. Residues 693-752 are Mitochondrial intermembrane-facing; the sequence is AKVLKVPIGSTLGFGSSASTTSWWLSGAQARGAGGPNATKVSSWFDWIRWQSSSNVRSEL.

Belongs to the mitochondrial Rho GTPase family.

Its subcellular location is the mitochondrion outer membrane. Functionally, mitochondrial GTPase involved in mitochondrial trafficking. Probably involved in control of anterograde transport of mitochondria and their subcellular distribution. This chain is Mitochondrial Rho GTPase 1 (GEM1), found in Mycosarcoma maydis (Corn smut fungus).